The sequence spans 932 residues: Protocadherin gamma-A12 (932 aa).

An N-terminal signal peptide occupies residues 1–29; it reads MIPARLHRDYKGLVLLGILLGTLWETGCT. 6 Cadherin domains span residues 30 to 133, 134 to 242, 243 to 347, 348 to 452, 453 to 562, and 570 to 683; these read QIRY…APYF, RESE…APAF, AQPE…APEV, VLTS…PPVF, PQAS…APEI, and DGST…SPAN. At 30–692 the chain is on the extracellular side; that stretch reads QIRYSVPEEL…NSETSDLTLY (663 aa). Asparagine 265, asparagine 419, and asparagine 545 each carry an N-linked (GlcNAc...) asparagine glycan. A helical transmembrane segment spans residues 693-713; that stretch reads LVVAVAAVSCVFLAFVILLLA. Residues 714 to 932 are Cytoplasmic-facing; the sequence is LRLRRWHKSR…KKKSGKKEKK (219 aa). Disordered regions lie at residues 803–841 and 902–932; these read GHGLIEQAPPNTDWRFSQAQRPGTSGSQNGDDTGTWPNN and ATLTNAAGKRDGKAPAGGNGNKKKSGKKEKK. The segment covering 816–841 has biased composition (polar residues); that stretch reads WRFSQAQRPGTSGSQNGDDTGTWPNN. Positions 922–932 are enriched in basic residues; sequence NKKKSGKKEKK.

It localises to the cell membrane. Functionally, potential calcium-dependent cell-adhesion protein. May be involved in the establishment and maintenance of specific neuronal connections in the brain. The chain is Protocadherin gamma-A12 (PCDHGA12) from Pan troglodytes (Chimpanzee).